We begin with the raw amino-acid sequence, 409 residues long: Protein PHOSPHATE STARVATION RESPONSE 1 (409 aa).

Residues 1–15 (MEARPVHRSGSRDLT) are compositionally biased toward basic and acidic residues. Disordered regions lie at residues 1 to 42 (MEAR…NSQL), 86 to 108 (EKQQHYTGSSSNNAVQTPSNNDS), and 178 to 226 (ETNS…TGKA). Composition is skewed to polar residues over residues 16–26 (RTSSIPSTQKP) and 90–108 (HYTGSSSNNAVQTPSNNDS). Residues 192-224 (QIPQPQIVQQQPSPSVELRPVSTTSSNSNNGTG) are compositionally biased toward low complexity. Residues 222 to 282 (GTGKARMRWT…HLQKYRTARY (61 aa)) form the HTH myb-type domain. A DNA-binding region (H-T-H motif) is located at residues 253–278 (PKGVLKIMKVEGLTIYHVKSHLQKYR). Residues 314–334 (TEALRLQMEVQKQLHEQLEIQ) adopt a coiled-coil conformation. The LHEQLE motif lies at 327–332 (LHEQLE). Over residues 358-370 (GLTKGTASTSDSA) the composition is skewed to polar residues. Residues 358-409 (GLTKGTASTSDSAAKSEQEDKKTADSKEVPEEETRKCEELESPQPKRPKIDN) form a disordered region. Residues 371–396 (AKSEQEDKKTADSKEVPEEETRKCEE) show a composition bias toward basic and acidic residues. Residue Ser-399 is modified to Phosphoserine.

The protein belongs to the MYB-CC family. As to quaternary structure, homodimers and heterodimers. Interacts with SPX1 in a Pi-dependent manner. Does not interact with PHL2 or PHL3. In terms of processing, sumoylated by SIZ1. Sumoylation controls phosphate deficiency responses.

It is found in the nucleus. Functionally, transcription factor involved in phosphate starvation signaling. Binds as a dimer to P1BS, an imperfect palindromic sequence 5'-GNATATNC-3', to promote the expression of inorganic phosphate (Pi) starvation-responsive genes. SPX1 is a competitive inhibitor of this DNA-binding. PHR1 binding to its targets is low Pi-dependent. Regulates the expression of miR399. Regulates the expression of IPS1 (At3g09922), a non-coding RNA that mimics the target of miR399 to block the cleavage of PHO2 under Pi-deficient conditions. Regulates lipid remodeling and triacylglycerol accumulation during phosphorus starvation. Required for the shoot-specific hypoxic response. Regulates FER1 expression upon phosphate starvation, linking iron and phosphate homeostasis. Contributes to the homeostasis of both sulfate and phosphate in plants under phosphate deficiency. Required for adaptation to high light and retaining functional photosynthesis during phosphate starvation. Involved in the coregulation of Zn and Pi homeostasis. This chain is Protein PHOSPHATE STARVATION RESPONSE 1, found in Arabidopsis thaliana (Mouse-ear cress).